A 506-amino-acid chain; its full sequence is MDTILRLSHITKSFPGVKALSDIDLEIARGEIHALLGENGAGKSTLMKILCGIHQPDAGTIEIDGAARHFADYHDAVAAGVGIVFQEFSLIPHLDAVDNLFLGRELRNRWGARDRKRMRAAAAAIFARLGVAIDLDAPIRTLSVAQQQFVEIGKALSLDARILILDEPTATLTPAEAEHLFAIMRELKRQGVAMIFISHHLDEIFVVCDRITVLRDGQYVATTEVARTDVEQLVRMMVGRRIESSFPPKPVLPADAPAVLEVDALQIERDGPVNRFALREGEILGFAGLVGSGRTETALAVIGATRAHRKELRVRGAAAKLADPADALRAGIGILPESRKTEGLVTSFSIRDNISLNNLGKYRSMRWLIDRRGEARTTHDVMRRVGVKAPSIHTEVATLSGGNQQKVVIARWLNHHTSVLIFDEPTRGIDVGAKAEIYGLMRELTARGYAIIMISSELPEIVGMCDRVAVFRQGRIEATLEGDEIDPDTVMTYATAGTRGATHEPA.

2 ABC transporter domains span residues 5-241 (LRLS…VGRR) and 254-498 (ADAP…TAGT). ATP is bound at residue 37–44 (GENGAGKS).

This sequence belongs to the ABC transporter superfamily. Ribose importer (TC 3.A.1.2.1) family. In terms of assembly, the complex is composed of an ATP-binding protein (RbsA), two transmembrane proteins (RbsC) and a solute-binding protein (RbsB).

The protein resides in the cell inner membrane. It catalyses the reaction D-ribose(out) + ATP + H2O = D-ribose(in) + ADP + phosphate + H(+). Its function is as follows. Part of the ABC transporter complex RbsABC involved in ribose import. Responsible for energy coupling to the transport system. The protein is Ribose import ATP-binding protein RbsA 2 of Burkholderia cenocepacia (strain HI2424).